Here is a 462-residue protein sequence, read N- to C-terminus: tRNA modification GTPase MnmE (462 aa).

(6S)-5-formyl-5,6,7,8-tetrahydrofolate contacts are provided by Arg-27, Glu-89, and Arg-128. A TrmE-type G domain is found at 223 to 383; the sequence is GLKIAIVGRP…LEAAILAAVG (161 aa). GTP-binding positions include 233-238, 252-258, and 277-280; these read NVGKSS, TDLPGRT, and DTAG. The Mg(2+) site is built by Ser-237 and Thr-258. A (6S)-5-formyl-5,6,7,8-tetrahydrofolate-binding site is contributed by Lys-462.

The protein belongs to the TRAFAC class TrmE-Era-EngA-EngB-Septin-like GTPase superfamily. TrmE GTPase family. As to quaternary structure, homodimer. Heterotetramer of two MnmE and two MnmG subunits. K(+) serves as cofactor.

The protein resides in the cytoplasm. Functionally, exhibits a very high intrinsic GTPase hydrolysis rate. Involved in the addition of a carboxymethylaminomethyl (cmnm) group at the wobble position (U34) of certain tRNAs, forming tRNA-cmnm(5)s(2)U34. This is tRNA modification GTPase MnmE from Synechococcus sp. (strain ATCC 27144 / PCC 6301 / SAUG 1402/1) (Anacystis nidulans).